A 498-amino-acid polypeptide reads, in one-letter code: MAKSNSKDIVLIGAGVLSTTFGSMLKEIEPDWNIHVYERLDRPAIESSNERNNAGTGHAALCELNYTVLQPDGSIDIEKAKVINEEFEISKQFWGHLVKSGSIENPRGFINPLPHISYVRGKNNVKFLKDRYEAMKAFPMFDNIEYTEDIEVMKKWIPLMMKGREDNPGIMAASKIDEGTDVNFGELTRKMAKSIEAHPNATVQFNHEVVDFEQLSNGQWEVTVKNRLTGEKFKQVTDYVFIGAGGGAIPLLQKTGIPESKHLGGFPISGQFLACTNPQVIEQHDAKVYGKEPPGTPPMTVPHLDTRYIDGQRTLLFGPFANVGPKFLKNGSNLDLFKSVKTYNITTLLAAAVKNLPLIKYSFDQVIMTKEGCMNHLRTFYPEARNEDWQLYTAGKRVQVIKDTPEHGKGFIQFGTEVVNSQDHTVIALLGESPGASTSVSVALEVLERNFPEYKTEWAPKIKKMIPSYGESLIEDEKLMRKIRKQTSKDLELGYYEN.

The protein belongs to the MQO family. FAD is required as a cofactor.

The enzyme catalyses (S)-malate + a quinone = a quinol + oxaloacetate. The protein operates within carbohydrate metabolism; tricarboxylic acid cycle; oxaloacetate from (S)-malate (quinone route): step 1/1. This chain is Probable malate:quinone oxidoreductase 2, found in Staphylococcus aureus (strain MW2).